We begin with the raw amino-acid sequence, 149 residues long: Interleukin-2 (149 aa).

Positions 1-20 (MYRMQLLSCIALTLAVLANS) are cleaved as a signal peptide. Residue Thr23 is glycosylated (O-linked (GalNAc...) threonine). Cysteines 78 and 121 form a disulfide. An N-linked (GlcNAc...) asparagine glycan is attached at Asn106.

The protein belongs to the IL-2 family.

Its subcellular location is the secreted. Its function is as follows. Cytokine produced by activated CD4-positive helper T-cells and to a lesser extend activated CD8-positive T-cells and natural killer (NK) cells that plays pivotal roles in the immune response and tolerance. Binds to a receptor complex composed of either the high-affinity trimeric IL-2R (IL2RA/CD25, IL2RB/CD122 and IL2RG/CD132) or the low-affinity dimeric IL-2R (IL2RB and IL2RG). Interaction with the receptor leads to oligomerization and conformation changes in the IL-2R subunits resulting in downstream signaling starting with phosphorylation of JAK1 and JAK3. In turn, JAK1 and JAK3 phosphorylate the receptor to form a docking site leading to the phosphorylation of several substrates including STAT5. This process leads to activation of several pathways including STAT, phosphoinositide-3-kinase/PI3K and mitogen-activated protein kinase/MAPK pathways. Functions as a T-cell growth factor and can increase NK-cell cytolytic activity as well. Promotes strong proliferation of activated B-cells and subsequently immunoglobulin production. Plays a pivotal role in regulating the adaptive immune system by controlling the survival and proliferation of regulatory T-cells, which are required for the maintenance of immune tolerance. Moreover, participates in the differentiation and homeostasis of effector T-cell subsets, including Th1, Th2, Th17 as well as memory CD8-positive T-cells. This Equus caballus (Horse) protein is Interleukin-2 (IL2).